The sequence spans 414 residues: MGMFERDTEIYLDRDALREDYQPENLVGRDTELNRYRAALQPVINGEQPNNIFLYGKTGVGKTAGTRYLIDHLEEDAAKYEDIDLTVKMLNCDGLSSSYQIATRLVNEFRDETSQISTTGYPRATVYDMLWTELDSCGGTIYIVLDEVDHIEDDSILYQLPRARANDNLSSAKIGIIGISNDFSFRDDLSPKVKSSLCEEEIQFPAYDAKELIQILQQRADVAFHDGVLEDGVIELCAAYGAKDAGDARQSLDLLMKTGDLARDKDTDTISEDLVREARDVLERGRIQEGISGLTQHGHLVVYAMVTLDQEGKTPARTRDIRPRYTNFAEKAGIDPLVPRRMRDHLGELSMLGIISAIERNEGRRGGTYREYSLEMDPEMILAALEKTVDDVGIHKSVTNLVDAEATLSDFQST.

ATP is bound by residues 60-64 (VGKTA), Y207, and R219.

This sequence belongs to the CDC6/cdc18 family.

Involved in regulation of DNA replication. The sequence is that of ORC1-type DNA replication protein 11 (cdc6k) from Haloarcula marismortui (strain ATCC 43049 / DSM 3752 / JCM 8966 / VKM B-1809) (Halobacterium marismortui).